The chain runs to 1413 residues: DNA-directed RNA polymerase subunit beta' (1413 aa).

Cysteine 70, cysteine 72, cysteine 85, and cysteine 88 together coordinate Zn(2+). Positions 460, 462, and 464 each coordinate Mg(2+). Zn(2+)-binding residues include cysteine 814, cysteine 888, cysteine 895, and cysteine 898.

Belongs to the RNA polymerase beta' chain family. The RNAP catalytic core consists of 2 alpha, 1 beta, 1 beta' and 1 omega subunit. When a sigma factor is associated with the core the holoenzyme is formed, which can initiate transcription. Mg(2+) is required as a cofactor. Zn(2+) serves as cofactor.

It catalyses the reaction RNA(n) + a ribonucleoside 5'-triphosphate = RNA(n+1) + diphosphate. DNA-dependent RNA polymerase catalyzes the transcription of DNA into RNA using the four ribonucleoside triphosphates as substrates. In Bordetella avium (strain 197N), this protein is DNA-directed RNA polymerase subunit beta'.